A 173-amino-acid polypeptide reads, in one-letter code: Ribosome maturation factor RimM (173 aa).

Residues 95–173 form the PRC barrel domain; it reads EGEYYWRQLE…LMVVDWDPDF (79 aa).

It belongs to the RimM family. Binds ribosomal protein uS19.

It localises to the cytoplasm. Functionally, an accessory protein needed during the final step in the assembly of 30S ribosomal subunit, possibly for assembly of the head region. Essential for efficient processing of 16S rRNA. May be needed both before and after RbfA during the maturation of 16S rRNA. It has affinity for free ribosomal 30S subunits but not for 70S ribosomes. The polypeptide is Ribosome maturation factor RimM (Hahella chejuensis (strain KCTC 2396)).